The chain runs to 179 residues: Large ribosomal subunit protein uL6 (179 aa).

Belongs to the universal ribosomal protein uL6 family. In terms of assembly, part of the 50S ribosomal subunit.

This protein binds to the 23S rRNA, and is important in its secondary structure. It is located near the subunit interface in the base of the L7/L12 stalk, and near the tRNA binding site of the peptidyltransferase center. In Syntrophus aciditrophicus (strain SB), this protein is Large ribosomal subunit protein uL6.